A 60-amino-acid chain; its full sequence is Large ribosomal subunit protein uL30 (60 aa).

This sequence belongs to the universal ribosomal protein uL30 family. In terms of assembly, part of the 50S ribosomal subunit.

This Ligilactobacillus salivarius (strain UCC118) (Lactobacillus salivarius) protein is Large ribosomal subunit protein uL30.